A 646-amino-acid chain; its full sequence is Nucleoside triphosphatase I (646 aa).

A Helicase ATP-binding domain is found at 48–213; sequence FIGLKNLNSM…NNLIGLLRPN (166 aa). Position 61–68 (61–68) interacts with ATP; it reads WDTGMGKT. Positions 151–154 match the DEXH box motif; the sequence is DEVH. The Helicase C-terminal domain occupies 377–540; that stretch reads YIEACRIILN…KINVVFDLLK (164 aa). Residues 466 to 532 form a binding to the cap-specific mRNA (nucleoside-2'-O-)-methyltransferase region; sequence DIIILDMPWN…DIIKDKQSKI (67 aa).

The protein belongs to the helicase family. NPH I subfamily. In terms of assembly, monomer. Interacts (via C-terminus) with RAP94 (via N-terminus). Interacts with the cap-specific mRNA (nucleoside-2'-O-)-methyltransferase.

The protein resides in the virion. It carries out the reaction a ribonucleoside 5'-triphosphate + H2O = a ribonucleoside 5'-diphosphate + phosphate + H(+). Its function is as follows. DNA-dependent ATPase required for providing the needed energy to achieve the termination of early transcripts. Acts in concert with the RAP94 subunit of the virion RNA polymerase and the capping enzyme/VTF to catalyze release of UUUUUNU-containing nascent RNA from the elongation complex. NPH-I must bind ssDNA in order to exhibit ATPase activity. In Heliothis armigera entomopoxvirus (HaEPV), this protein is Nucleoside triphosphatase I (NPH1).